The chain runs to 503 residues: Guanosine-5'-triphosphate,3'-diphosphate pyrophosphatase (503 aa).

The protein belongs to the GppA/Ppx family. GppA subfamily.

It catalyses the reaction guanosine 3'-diphosphate 5'-triphosphate + H2O = guanosine 3',5'-bis(diphosphate) + phosphate + H(+). It functions in the pathway purine metabolism; ppGpp biosynthesis; ppGpp from GTP: step 2/2. Functionally, catalyzes the conversion of pppGpp to ppGpp. Guanosine pentaphosphate (pppGpp) is a cytoplasmic signaling molecule which together with ppGpp controls the 'stringent response', an adaptive process that allows bacteria to respond to amino acid starvation, resulting in the coordinated regulation of numerous cellular activities. This Pseudoalteromonas atlantica (strain T6c / ATCC BAA-1087) protein is Guanosine-5'-triphosphate,3'-diphosphate pyrophosphatase.